The sequence spans 319 residues: Ribonucleoside-diphosphate reductase small chain (319 aa).

D70, E101, and H104 together coordinate Fe cation. Residue Y108 is part of the active site. E163, E197, and H200 together coordinate Fe cation. The tract at residues 313-319 is interaction with R1; the sequence is FSLDVDF.

It belongs to the ribonucleoside diphosphate reductase small chain family. In terms of assembly, interacts with RNR1/OPG080 subunit. Can interact with host RNR1 supunit. It depends on Fe cation as a cofactor.

The catalysed reaction is a 2'-deoxyribonucleoside 5'-diphosphate + [thioredoxin]-disulfide + H2O = a ribonucleoside 5'-diphosphate + [thioredoxin]-dithiol. In terms of biological role, ribonucleoside-diphosphate reductase holoenzyme provides the precursors necessary for viral DNA synthesis. Allows virus growth in non-dividing cells. Catalyzes the biosynthesis of deoxyribonucleotides from the corresponding ribonucleotides. The polypeptide is Ribonucleoside-diphosphate reductase small chain (OPG048) (Vaccinia virus (strain Copenhagen) (VACV)).